Consider the following 498-residue polypeptide: Resveratrol cleavage oxygenase 1 (498 aa).

The piceatannol site is built by Tyr-105 and Lys-136. Tyr-105 and Lys-136 together coordinate trans-resveratrol. The Fe cation site is built by His-169, His-220, and His-285. Glu-355 lines the piceatannol pocket. Glu-355 serves as a coordination point for trans-resveratrol. His-481 lines the Fe cation pocket.

It belongs to the carotenoid oxygenase family. Requires Fe(2+) as cofactor.

It catalyses the reaction trans-resveratrol + O2 = 3,5-dihydroxybenzaldehyde + 4-hydroxybenzaldehyde. The enzyme catalyses piceatannol + O2 = 3,5-dihydroxybenzaldehyde + 3,4-dihydroxybenzaldehyde. Dioxygenase that cleaves the interphenyl C-alpha-C-beta double bond of resveratrol to yield 3,5-dihydroxybenzaldehyde and 4-hydroxybenzaldehyde. Also cleaves piceatannol, a compound that differs from resveratrol only in the occurrence of an additional hydroxyl group, which leads to the production of 3,4-dihydroxybenzaldehyde and 3,5-hydroxybenzaldehyde. This is Resveratrol cleavage oxygenase 1 from Aspergillus fumigatus (strain ATCC MYA-4609 / CBS 101355 / FGSC A1100 / Af293) (Neosartorya fumigata).